The sequence spans 199 residues: Dephospho-CoA kinase (199 aa).

A DPCK domain is found at Val4 to Lys199. An ATP-binding site is contributed by Ala12–Thr17.

The protein belongs to the CoaE family.

The protein localises to the cytoplasm. The catalysed reaction is 3'-dephospho-CoA + ATP = ADP + CoA + H(+). Its pathway is cofactor biosynthesis; coenzyme A biosynthesis; CoA from (R)-pantothenate: step 5/5. Catalyzes the phosphorylation of the 3'-hydroxyl group of dephosphocoenzyme A to form coenzyme A. This chain is Dephospho-CoA kinase, found in Enterococcus faecalis (strain ATCC 700802 / V583).